Reading from the N-terminus, the 147-residue chain is Deoxyuridine 5'-triphosphate nucleotidohydrolase (147 aa).

Substrate contacts are provided by residues 63-65, Asn76, and 80-82; these read RSG and TID.

This sequence belongs to the dUTPase family. The cofactor is Mg(2+).

The catalysed reaction is dUTP + H2O = dUMP + diphosphate + H(+). Its pathway is pyrimidine metabolism; dUMP biosynthesis; dUMP from dCTP (dUTP route): step 2/2. In terms of biological role, this enzyme is involved in nucleotide metabolism: it produces dUMP, the immediate precursor of thymidine nucleotides and it decreases the intracellular concentration of dUTP so that uracil cannot be incorporated into DNA. This is Deoxyuridine 5'-triphosphate nucleotidohydrolase from Chlamydia felis (strain Fe/C-56) (Chlamydophila felis).